We begin with the raw amino-acid sequence, 636 residues long: Chaperone protein HtpG (636 aa).

The segment at 1–344 is a; substrate-binding; it reads MTMSVETQKE…SNDLSLNVSR (344 aa). Residues 345-561 form a b region; sequence EILQKDPIID…EQDLGMQMRQ (217 aa). Residues 562–636 are c; it reads ILEASGQKVP…LNKLLVELSV (75 aa).

The protein belongs to the heat shock protein 90 family. In terms of assembly, homodimer.

It is found in the cytoplasm. Its function is as follows. Molecular chaperone. Has ATPase activity. This is Chaperone protein HtpG from Pseudomonas fluorescens (strain SBW25).